Consider the following 150-residue polypeptide: Large ribosomal subunit protein bL9 (150 aa).

The protein belongs to the bacterial ribosomal protein bL9 family.

Functionally, binds to the 23S rRNA. The polypeptide is Large ribosomal subunit protein bL9 (Corynebacterium glutamicum (strain R)).